The sequence spans 182 residues: Early upstream open reading frame (182 aa).

The protein belongs to the EUO family.

In Chlamydophila psittaci (strain ATCC VR-125 / 6BC) (Chlamydia psittaci), this protein is Early upstream open reading frame.